The primary structure comprises 518 residues: Lysine--tRNA ligase (518 aa).

2 residues coordinate Mg(2+): glutamate 407 and glutamate 414.

This sequence belongs to the class-II aminoacyl-tRNA synthetase family. As to quaternary structure, homodimer. The cofactor is Mg(2+).

It localises to the cytoplasm. The enzyme catalyses tRNA(Lys) + L-lysine + ATP = L-lysyl-tRNA(Lys) + AMP + diphosphate. This chain is Lysine--tRNA ligase, found in Helicobacter hepaticus (strain ATCC 51449 / 3B1).